The following is a 524-amino-acid chain: CDC50-related protein CDC50.1 (524 aa).

Composition is skewed to polar residues over residues methionine 1 to serine 19 and threonine 26 to leucine 39. Disordered stretches follow at residues methionine 1–proline 40 and alanine 52–serine 86. Topologically, residues methionine 1–valine 181 are cytoplasmic. Residues glycine 67–serine 80 are compositionally biased toward low complexity. Residues valine 182–phenylalanine 202 form a helical membrane-spanning segment. Over glutamate 203–serine 473 the chain is Extracellular. Asparagine 297 and asparagine 339 each carry an N-linked (GlcNAc...) asparagine glycan. The helical transmembrane segment at leucine 474–methionine 494 threads the bilayer. At leucine 495–lysine 524 the chain is on the cytoplasmic side.

Belongs to the CDC50/LEM3 family. Interacts with GC; the interaction regulates guanylate cyclase GC trafficking and sensing environmental changes.

The protein localises to the membrane. Its function is as follows. In tachyzoites, required for the cellular trafficking of guanylate cyclase GC and UGO to the cell membrane. May play a role in the folding of the GC P-type ATPase-like domain to sense vacuolar changes in phosphatidic acid and pH levels which trigger parasite egress. The chain is CDC50-related protein CDC50.1 from Toxoplasma gondii (strain ATCC 50853 / GT1).